A 508-amino-acid chain; its full sequence is Photosystem II CP47 reaction center protein (508 aa).

6 helical membrane passes run 21–36, 101–115, 140–156, 203–218, 237–252, and 457–472; these read SVHI…WAGS, IVFS…IWHW, GIHL…FGAF, IAAG…FHLS, VLSS…AFVV, and TFAL…HGAR.

It belongs to the PsbB/PsbC family. PsbB subfamily. In terms of assembly, PSII is composed of 1 copy each of membrane proteins PsbA, PsbB, PsbC, PsbD, PsbE, PsbF, PsbH, PsbI, PsbJ, PsbK, PsbL, PsbM, PsbT, PsbX, PsbY, PsbZ, Psb30/Ycf12, at least 3 peripheral proteins of the oxygen-evolving complex and a large number of cofactors. It forms dimeric complexes. It depends on Binds multiple chlorophylls. PSII binds additional chlorophylls, carotenoids and specific lipids. as a cofactor.

Its subcellular location is the plastid. The protein resides in the chloroplast thylakoid membrane. Its function is as follows. One of the components of the core complex of photosystem II (PSII). It binds chlorophyll and helps catalyze the primary light-induced photochemical processes of PSII. PSII is a light-driven water:plastoquinone oxidoreductase, using light energy to abstract electrons from H(2)O, generating O(2) and a proton gradient subsequently used for ATP formation. The polypeptide is Photosystem II CP47 reaction center protein (Drimys granadensis).